The following is a 75-amino-acid chain: Caerin 1.11 (75 aa).

The signal sequence occupies residues 1-22 (MASLKKSLFLVLFLGFVSVSIC). Residues 23–49 (EEEKRQEDEDEHEEEGENQEEGSEEKR) constitute a propeptide that is removed on maturation. A disordered region spans residues 24 to 48 (EEKRQEDEDEHEEEGENQEEGSEEK). A compositionally biased stretch (acidic residues) spans 30–45 (DEDEHEEEGENQEEGS). Position 74 is a leucine amide (leucine 74).

It belongs to the frog skin active peptide (FSAP) family. Caerin subfamily. As to expression, expressed by the skin glands.

Its subcellular location is the secreted. The protein resides in the target cell membrane. Its function is as follows. Cationic amphipathic alpha-helical antimicrobial peptide with weak or no activity against both Gram-positive and Gram-negative bacteria. Is weakly active against E.coli (MIC=25 uM), E.cloacae (MIC=50 uM), K.pneumoniae (MIC=25 uM), and S.haemolyticus (MIC=50 uM). Has no activity against S.typhimurium, S.enteritidis, B.megaterium, and S.aureus (MIC&gt;100 uM). In Ranoidea caerulea (Green tree frog), this protein is Caerin 1.11.